The primary structure comprises 549 residues: S-methyl thiourocanate hydratase (549 aa).

Methionine 49, glycine 173, methionine 174, glycine 175, aspartate 193, serine 198, asparagine 239, alanine 240, glutamine 260, valine 270, and tyrosine 318 together coordinate NAD(+).

Belongs to the urocanase family. S-methyl thiourocanate hydratase subfamily. The cofactor is NAD(+).

The catalysed reaction is S-methyl-(E)-thiourocanate + H2O = S-methyl-thiohydantoin-5-propanoate. Hydratase involved in the catabolism of S-methyl ergothioneine. Catalyzes the 1,4-addition of H(2)O to S-methyl thiourocanate, leading to the formation of S-methyl-thiohydantoin-5-propanoate, the second step in S-methyl ergothioneine degradation. Cannot use urocanate or thiourocanate as substrate. The protein is S-methyl thiourocanate hydratase of Variovorax sp. (strain JCM 16519 / RA8).